A 23-amino-acid chain; its full sequence is Alpha-amanitin proprotein (23 aa).

I1 bears the (3R,4R)-4,5-dihydroxyisoleucine; in form alpha-amanitin mark. Residue I1 is modified to (3R,4S)-4-hydroxyisoleucine; in form gamma-amanitin. Positions 1–8 (IWGIGCNP) form a cross-link, cyclopeptide (Ile-Pro). The segment at residues 2 to 6 (WGIGC) is a cross-link (2'-cysteinyl-6'-hydroxytryptophan sulfoxide (Trp-Cys)). A 4-hydroxyproline modification is found at P8. A propeptide spanning residues 9 to 23 (CVGDEVTALITRGEA) is cleaved from the precursor.

The protein belongs to the MSDIN fungal toxin family. Post-translationally, processed by the macrocyclase-peptidase enzyme POPB to yield a toxic cyclic decapeptide. POPB first removes 10 residues from the N-terminus. Conformational trapping of the remaining peptide forces the enzyme to release this intermediate rather than proceed to macrocyclization. The enzyme rebinds the remaining peptide in a different conformation and catalyzes macrocyclization of the N-terminal 8 residues.

In terms of biological role, major toxin belonging to the bicyclic octapeptides amatoxins that acts by binding non-competitively to RNA polymerase II and greatly slowing the elongation of transcripts from target promoters. In Amanita fuligineoides, this protein is Alpha-amanitin proprotein.